We begin with the raw amino-acid sequence, 519 residues long: Light-independent protochlorophyllide reductase subunit B (519 aa).

Residue Asp-36 coordinates [4Fe-4S] cluster. Asp-274 (proton donor) is an active-site residue. 409 to 410 (GL) contributes to the substrate binding site. Residues 426 to 465 (DEAGPSHHGGHSPKPSEAARTPDKVEERADPAPEAPQTGS) form a disordered region. The segment covering 445–456 (RTPDKVEERADP) has biased composition (basic and acidic residues).

This sequence belongs to the ChlB/BchB/BchZ family. As to quaternary structure, protochlorophyllide reductase is composed of three subunits; BchL, BchN and BchB. Forms a heterotetramer of two BchB and two BchN subunits. It depends on [4Fe-4S] cluster as a cofactor.

The enzyme catalyses chlorophyllide a + oxidized 2[4Fe-4S]-[ferredoxin] + 2 ADP + 2 phosphate = protochlorophyllide a + reduced 2[4Fe-4S]-[ferredoxin] + 2 ATP + 2 H2O. The protein operates within porphyrin-containing compound metabolism; bacteriochlorophyll biosynthesis (light-independent). In terms of biological role, component of the dark-operative protochlorophyllide reductase (DPOR) that uses Mg-ATP and reduced ferredoxin to reduce ring D of protochlorophyllide (Pchlide) to form chlorophyllide a (Chlide). This reaction is light-independent. The NB-protein (BchN-BchB) is the catalytic component of the complex. The chain is Light-independent protochlorophyllide reductase subunit B from Jannaschia sp. (strain CCS1).